A 236-amino-acid chain; its full sequence is 2,3,4,5-tetrahydropyridine-2,6-dicarboxylate N-acetyltransferase (236 aa).

The protein belongs to the transferase hexapeptide repeat family. DapH subfamily.

It catalyses the reaction (S)-2,3,4,5-tetrahydrodipicolinate + acetyl-CoA + H2O = L-2-acetamido-6-oxoheptanedioate + CoA. It participates in amino-acid biosynthesis; L-lysine biosynthesis via DAP pathway; LL-2,6-diaminopimelate from (S)-tetrahydrodipicolinate (acetylase route): step 1/3. Its function is as follows. Catalyzes the transfer of an acetyl group from acetyl-CoA to tetrahydrodipicolinate. The polypeptide is 2,3,4,5-tetrahydropyridine-2,6-dicarboxylate N-acetyltransferase (Clostridium botulinum (strain Okra / Type B1)).